We begin with the raw amino-acid sequence, 406 residues long: Renin (406 aa).

Positions 1–23 are cleaved as a signal peptide; that stretch reads MDGWRRMPRWGLLLLLWGSCTFG. The propeptide at 24-66 is activation peptide; sequence LPTDTTTFKRIFLKRMPSIRESLKERGVDMARLGPEWSQPMKR. Asn71 is a glycosylation site (N-linked (GlcNAc...) asparagine). The 318-residue stretch at 86-403 folds into the Peptidase A1 domain; that stretch reads YYGEIGIGTP…DRRNNRIGFA (318 aa). Asp104 is an active-site residue. Cysteines 117 and 124 form a disulfide. Residue Asn141 is glycosylated (N-linked (GlcNAc...) asparagine). The cysteines at positions 283 and 287 are disulfide-linked. Asp292 is an active-site residue. Cys325 and Cys362 are disulfide-bonded.

This sequence belongs to the peptidase A1 family. As to quaternary structure, interacts with ATP6AP2.

It localises to the secreted. The protein localises to the membrane. The catalysed reaction is Cleavage of Leu-|-Xaa bond in angiotensinogen to generate angiotensin I.. Its activity is regulated as follows. Interaction with ATP6AP2 results in a 5-fold increased efficiency in angiotensinogen processing. In terms of biological role, renin is a highly specific endopeptidase, whose only known function is to generate angiotensin I from angiotensinogen in the plasma, initiating a cascade of reactions that produce an elevation of blood pressure and increased sodium retention by the kidney. This is Renin (REN) from Macaca mulatta (Rhesus macaque).